Reading from the N-terminus, the 1361-residue chain is DNA-directed RNA polymerase subunit beta' (1361 aa).

Zn(2+) contacts are provided by cysteine 69, cysteine 71, cysteine 84, and cysteine 87. Mg(2+) contacts are provided by aspartate 460, aspartate 462, and aspartate 464. Zn(2+) contacts are provided by cysteine 808, cysteine 882, cysteine 889, and cysteine 892.

This sequence belongs to the RNA polymerase beta' chain family. The RNAP catalytic core consists of 2 alpha, 1 beta, 1 beta' and 1 omega subunit. When a sigma factor is associated with the core the holoenzyme is formed, which can initiate transcription. Requires Mg(2+) as cofactor. The cofactor is Zn(2+).

It carries out the reaction RNA(n) + a ribonucleoside 5'-triphosphate = RNA(n+1) + diphosphate. Functionally, DNA-dependent RNA polymerase catalyzes the transcription of DNA into RNA using the four ribonucleoside triphosphates as substrates. The protein is DNA-directed RNA polymerase subunit beta' of Rickettsia bellii (strain RML369-C).